Reading from the N-terminus, the 514-residue chain is Threonine synthase (514 aa).

Lys124 carries the post-translational modification N6-(pyridoxal phosphate)lysine. Residues Gly277, Asn278, Phe279, Asp281, and Thr449 each contribute to the pyridoxal 5'-phosphate site. Ser467 is modified (phosphoserine).

The protein belongs to the threonine synthase family. The cofactor is pyridoxal 5'-phosphate.

It carries out the reaction O-phospho-L-homoserine + H2O = L-threonine + phosphate. Its pathway is amino-acid biosynthesis; L-threonine biosynthesis; L-threonine from L-aspartate: step 5/5. Functionally, catalyzes the gamma-elimination of phosphate from L-phosphohomoserine and the beta-addition of water to produce L-threonine. The protein is Threonine synthase (THR4) of Saccharomyces cerevisiae (strain ATCC 204508 / S288c) (Baker's yeast).